A 352-amino-acid chain; its full sequence is MSEGDLAVMKPETMKSYIWLQTADGSIQQVEQEVAMFCPMICQEVIQKGVGSSKNHAISLPQRVNPAMFSLILDYCRFHQLPGRSNKERKTYDERFIRMDTKRLCELTSAADSLQLKPLVDLTSRALARIIEGKNPEEIREIFHLPDDLTEEEKLEPLKNSMDDPRIRLLNRLYAKKRKELKERERLKNVEVEEHVDERSVDDLLSFINGRDHKAVKMSKGKKKKKKKKDQKIVSSNNIHDKESHDLRSKQQCVEEIGSSMREVPNLLSAEDDISTPNAGSEDEDIDDEIDPAMRELLDREVEDFAQRLNSNWVRSLGKERRPVHFSINGNGTTRRHTGMVSIWRPCMFTLF.

An interaction with the F-box domain of F-box proteins region spans residues 108–167 (TSAADSLQLKPLVDLTSRALARIIEGKNPEEIREIFHLPDDLTEEEKLEPLKNSMDDPRI). 2 disordered regions span residues 214–251 (KAVK…RSKQ) and 267–288 (LLSA…DIDD). Basic residues predominate over residues 216–230 (VKMSKGKKKKKKKKD). Residues 239 to 249 (IHDKESHDLRS) are compositionally biased toward basic and acidic residues.

Belongs to the SKP1 family. As to quaternary structure, part of a SCF (SKP1-cullin-F-box) protein ligase complex. In terms of tissue distribution, expressed in young seedlings, roots, leaves, floral stems, inflorescences, and siliques.

The protein localises to the nucleus. It participates in protein modification; protein ubiquitination. Functionally, involved in ubiquitination and subsequent proteasomal degradation of target proteins. Together with CUL1, RBX1 and a F-box protein, it forms a SCF E3 ubiquitin ligase complex. The functional specificity of this complex depends on the type of F-box protein. In the SCF complex, it serves as an adapter that links the F-box protein to CUL1. The sequence is that of SKP1-like protein 20 (ASK20) from Arabidopsis thaliana (Mouse-ear cress).